A 557-amino-acid chain; its full sequence is Formate--tetrahydrofolate ligase (557 aa).

67 to 74 (TPAGEGKT) contributes to the ATP binding site.

It belongs to the formate--tetrahydrofolate ligase family.

The enzyme catalyses (6S)-5,6,7,8-tetrahydrofolate + formate + ATP = (6R)-10-formyltetrahydrofolate + ADP + phosphate. It participates in one-carbon metabolism; tetrahydrofolate interconversion. The polypeptide is Formate--tetrahydrofolate ligase (Cereibacter sphaeroides (strain ATCC 17029 / ATH 2.4.9) (Rhodobacter sphaeroides)).